A 165-amino-acid polypeptide reads, in one-letter code: Endoribonuclease YbeY (165 aa).

Zn(2+) contacts are provided by His-126, His-130, and His-136.

Belongs to the endoribonuclease YbeY family. It depends on Zn(2+) as a cofactor.

It is found in the cytoplasm. Functionally, single strand-specific metallo-endoribonuclease involved in late-stage 70S ribosome quality control and in maturation of the 3' terminus of the 16S rRNA. This chain is Endoribonuclease YbeY, found in Ruegeria pomeroyi (strain ATCC 700808 / DSM 15171 / DSS-3) (Silicibacter pomeroyi).